The sequence spans 468 residues: Abscisic acid 8'-hydroxylase 4 (468 aa).

A helical membrane pass occupies residues 4 to 24 (IWFLVVPILILCLLLVRVIVS). Residue cysteine 415 participates in heme binding.

The protein belongs to the cytochrome P450 family. It depends on heme as a cofactor. In terms of tissue distribution, mainly expressed in flowers. Lower expression in siliques, rosette leaves, roots and stems. Not expressed in dry seeds. Expressed in silique envelopes, but not in embryo or endosperm during the seed development.

The protein resides in the membrane. It catalyses the reaction 2-cis-(+)-abscisate + reduced [NADPH--hemoprotein reductase] + O2 = (+)-8'-hydroxyabscisate + oxidized [NADPH--hemoprotein reductase] + H2O + H(+). Its pathway is plant hormone degradation; abscisic acid degradation. Involved in the oxidative degradation of abscisic acid, but not in the isomerization of the produced 8'-hydroxyabscisic acid (8'-OH-ABA) to (-)-phaseic acid (PA). This Arabidopsis thaliana (Mouse-ear cress) protein is Abscisic acid 8'-hydroxylase 4 (CYP707A4).